The chain runs to 56 residues: Large ribosomal subunit protein bL32 (56 aa).

The tract at residues 1 to 37 (MAVQQNKKSRSRRDMRRSHDALTTAAVSVDKTTGETH) is disordered. Positions 7–16 (KKSRSRRDMR) are enriched in basic residues.

The protein belongs to the bacterial ribosomal protein bL32 family.

The protein is Large ribosomal subunit protein bL32 of Haemophilus ducreyi (strain 35000HP / ATCC 700724).